The chain runs to 556 residues: Phenylalanine--tRNA ligase beta subunit (556 aa).

Positions 278 to 354 constitute a B5 domain; that stretch reads LTPKEFEVSF…IAYGYNNIDP (77 aa). Mg(2+) contacts are provided by aspartate 332, aspartate 338, glutamate 341, and aspartate 342.

It belongs to the phenylalanyl-tRNA synthetase beta subunit family. Type 2 subfamily. As to quaternary structure, tetramer of two alpha and two beta subunits. Mg(2+) serves as cofactor.

The protein localises to the cytoplasm. The catalysed reaction is tRNA(Phe) + L-phenylalanine + ATP = L-phenylalanyl-tRNA(Phe) + AMP + diphosphate + H(+). In Pyrococcus furiosus (strain ATCC 43587 / DSM 3638 / JCM 8422 / Vc1), this protein is Phenylalanine--tRNA ligase beta subunit.